Reading from the N-terminus, the 119-residue chain is Ribonuclease P protein component (119 aa).

The protein belongs to the RnpA family. In terms of assembly, consists of a catalytic RNA component (M1 or rnpB) and a protein subunit.

It carries out the reaction Endonucleolytic cleavage of RNA, removing 5'-extranucleotides from tRNA precursor.. Functionally, RNaseP catalyzes the removal of the 5'-leader sequence from pre-tRNA to produce the mature 5'-terminus. It can also cleave other RNA substrates such as 4.5S RNA. The protein component plays an auxiliary but essential role in vivo by binding to the 5'-leader sequence and broadening the substrate specificity of the ribozyme. This chain is Ribonuclease P protein component, found in Erwinia tasmaniensis (strain DSM 17950 / CFBP 7177 / CIP 109463 / NCPPB 4357 / Et1/99).